We begin with the raw amino-acid sequence, 411 residues long: Ribose-phosphate pyrophosphokinase 3, chloroplastic (411 aa).

Residues 1–39 constitute a chloroplast transit peptide; sequence MAAISPANATTAASLSLPQFSSTSSSLSSSSSPSFLNFK. D231 and H233 together coordinate Mg(2+). Residues 314 to 329 are binding of phosphoribosylpyrophosphate; the sequence is GRHVVIVDDLVQSGGT.

It belongs to the ribose-phosphate pyrophosphokinase family.

Its subcellular location is the plastid. It is found in the chloroplast. The catalysed reaction is D-ribose 5-phosphate + ATP = 5-phospho-alpha-D-ribose 1-diphosphate + AMP + H(+). The polypeptide is Ribose-phosphate pyrophosphokinase 3, chloroplastic (PRS3) (Arabidopsis thaliana (Mouse-ear cress)).